A 315-amino-acid polypeptide reads, in one-letter code: MLEIEKPKIECVEASEDGTYGKFVIEPLERGYGITLGNSLRRILLSSLPGGAANSIKIDGVLHEFSTVTGVKEDVTELILNIKGLALKMNGEGPSTIYIDAQGPGEVTAADIISDGNVEIMNKDMHIATLDDDGKLYMEINVDNGRGYVTQNKNKKEDLPIGTIPVDSIYTPVKRVNFTVENTRVGQITDYDKLSIEVWTNGTIQPEEAISLSAKILIEHFKLFMTLTDHADNVEIMVEKEEDKKEKVLEMTIEELDLSVRSYNCLKRAGINTVQELTERTIDDMMKVRNLGKKSLEEVQEKLAALGLGLKKSDE.

The tract at residues 1-228 (MLEIEKPKIE…EHFKLFMTLT (228 aa)) is alpha N-terminal domain (alpha-NTD). Residues 245–315 (KEKVLEMTIE…LGLGLKKSDE (71 aa)) are alpha C-terminal domain (alpha-CTD).

Belongs to the RNA polymerase alpha chain family. Homodimer. The RNAP catalytic core consists of 2 alpha, 1 beta, 1 beta' and 1 omega subunit. When a sigma factor is associated with the core the holoenzyme is formed, which can initiate transcription.

It carries out the reaction RNA(n) + a ribonucleoside 5'-triphosphate = RNA(n+1) + diphosphate. Its function is as follows. DNA-dependent RNA polymerase catalyzes the transcription of DNA into RNA using the four ribonucleoside triphosphates as substrates. This Clostridium novyi (strain NT) protein is DNA-directed RNA polymerase subunit alpha.